Here is a 597-residue protein sequence, read N- to C-terminus: uncharacterized protein (597 aa).

Residues methionine 1–arginine 23 are compositionally biased toward basic and acidic residues. Disordered stretches follow at residues methionine 1–valine 32 and arginine 171–proline 192. Positions glutamate 175–proline 186 are enriched in low complexity. 2 positions are modified to phosphoserine: serine 237 and serine 241. Disordered regions lie at residues serine 302–aspartate 335 and glutamate 549–lysine 569. Polar residues predominate over residues alanine 557 to serine 568.

This is an uncharacterized protein from Rattus norvegicus (Rat).